The primary structure comprises 406 residues: Protease ElaD (406 aa).

Residue H234 is part of the active site. Catalysis depends on C316, which acts as the Nucleophile.

It belongs to the peptidase C79 family.

Its function is as follows. Protease that can act as an efficient and specific deubiquitinating enzyme in vitro. Does not possess desumoylating and deneddylating activities. The physiological substrate is unknown. This is Protease ElaD (elaD) from Escherichia coli O139:H28 (strain E24377A / ETEC).